The sequence spans 303 residues: Coenzyme PQQ synthesis protein B (303 aa).

It belongs to the PqqB family.

Its pathway is cofactor biosynthesis; pyrroloquinoline quinone biosynthesis. Functionally, may be involved in the transport of PQQ or its precursor to the periplasm. This Pseudomonas putida (strain ATCC 700007 / DSM 6899 / JCM 31910 / BCRC 17059 / LMG 24140 / F1) protein is Coenzyme PQQ synthesis protein B.